The sequence spans 283 residues: Thymidylate synthase (283 aa).

A dUMP-binding site is contributed by arginine 22. Catalysis depends on cysteine 160, which acts as the Nucleophile. DUMP-binding positions include 180 to 183 (RSCD), asparagine 191, and 221 to 223 (HIY). Residue aspartate 183 coordinates (6R)-5,10-methylene-5,6,7,8-tetrahydrofolate. Serine 282 contacts (6R)-5,10-methylene-5,6,7,8-tetrahydrofolate.

The protein belongs to the thymidylate synthase family. Bacterial-type ThyA subfamily. As to quaternary structure, homodimer.

It localises to the cytoplasm. The enzyme catalyses dUMP + (6R)-5,10-methylene-5,6,7,8-tetrahydrofolate = 7,8-dihydrofolate + dTMP. It participates in pyrimidine metabolism; dTTP biosynthesis. Catalyzes the reductive methylation of 2'-deoxyuridine-5'-monophosphate (dUMP) to 2'-deoxythymidine-5'-monophosphate (dTMP) while utilizing 5,10-methylenetetrahydrofolate (mTHF) as the methyl donor and reductant in the reaction, yielding dihydrofolate (DHF) as a by-product. This enzymatic reaction provides an intracellular de novo source of dTMP, an essential precursor for DNA biosynthesis. The polypeptide is Thymidylate synthase (Haemophilus influenzae (strain PittGG)).